We begin with the raw amino-acid sequence, 147 residues long: Large ribosomal subunit protein uL15 (147 aa).

Positions 1–45 (MTIKLHHLRPAPGAKSDKIRVGRGEGGKRGKTAGRGTKGTKARKN) are disordered. Over residues 15–28 (KSDKIRVGRGEGGK) the composition is skewed to basic and acidic residues.

Belongs to the universal ribosomal protein uL15 family. Part of the 50S ribosomal subunit.

Binds to the 23S rRNA. The chain is Large ribosomal subunit protein uL15 from Rhodococcus jostii (strain RHA1).